We begin with the raw amino-acid sequence, 528 residues long: Adhesion G-protein coupled receptor G5 (528 aa).

Positions 1–21 (MDHCGALFLCLCLLTLQNATT) are cleaved as a signal peptide. Topologically, residues 22–245 (ETWEELLSYM…SPALVPAELL (224 aa)) are extracellular. 6 N-linked (GlcNAc...) asparagine glycosylation sites follow: Asn-58, Asn-65, Asn-146, Asn-147, Asn-173, and Asn-179. Residues 78-239 (FKLSCDFSGL…AVLMQLSPAL (162 aa)) form the GAIN-B domain. Disulfide bonds link Cys-189–Cys-221 and Cys-209–Cys-223. Residues 189-239 (CVFWKEGARKQPWGGWSPEGCRTEQPSHSQVLCRCNHLTYFAVLMQLSPAL) are GPS. Residues 228 to 236 (YFAVLMQLS) are stachel. Residues 246-271 (APLTYISLVGCSISIVASLITVLLHF) form a helical membrane-spanning segment. At 272 to 280 (HFRKQSDSL) the chain is on the cytoplasmic side. A helical membrane pass occupies residues 281-304 (TRIHMNLHASVLLLNIAFLLSPAF). The Extracellular portion of the chain corresponds to 305–314 (AMSPVPGSAC). Residues Cys-314 and Cys-404 are joined by a disulfide bond. The chain crosses the membrane as a helical span at residues 315 to 340 (TALAAALHYALLSCLTWMAIEGFNLY). Over 341–353 (LLLGRVYNIYIRR) the chain is Cytoplasmic. The chain crosses the membrane as a helical span at residues 354-377 (YVFKLGVLGWGAPALLVLLSLSVK). The Extracellular portion of the chain corresponds to 378 to 410 (SSVYGPCTIPVFDSWENGTGFQNMSICWVRSPV). Asn-394 and Asn-400 each carry an N-linked (GlcNAc...) asparagine glycan. A helical transmembrane segment spans residues 411–435 (VHSVLVMGYGGLTSLFNLVVLAWAL). Residues 436–455 (WTLRRLRERADAPSVRACHD) are Cytoplasmic-facing. Residues 456–477 (TVTVLGLTVLLGTTWALAFFSF) traverse the membrane as a helical segment. Over 478 to 481 (GVFL) the chain is Extracellular. Residues 482-505 (LPQLFLFTILNSLYGFFLFLWFCS) form a helical membrane-spanning segment. The Cytoplasmic portion of the chain corresponds to 506–528 (QRCRSEAEAKAQIEAFSSSQTTQ).

Belongs to the G-protein coupled receptor 2 family. Adhesion G-protein coupled receptor (ADGR) subfamily. Heterodimer of 2 chains generated by proteolytic processing; the large extracellular N-terminal fragment and the membrane-bound C-terminal fragment predominantly remain associated and non-covalently linked. Post-translationally, autoproteolytically processed at the GPS region of the GAIN-B domain; this cleavage modulates receptor activity. In terms of processing, N-glycsylated. Expressed in immune cells. Primarily found in granulocytes. Found in eosinophils.

It localises to the cell membrane. Forms a heterodimer of 2 chains generated by proteolytic processing that remain associated through non-covalent interactions mediated by the GAIN-B domain. In the inactivated receptor, the Stachel sequence (also named stalk) is embedded in the GAIN-B domain, where it adopts a beta-strand conformation. On activation, the Stachel moves into the 7 transmembrane region and adopts a twisted hook-shaped configuration that forms contacts within the receptor, leading to coupling of a G-alpha protein, which activates signaling. The cleaved GAIN-B and N-terminal domains can then dissociate from the rest of the receptor. Its function is as follows. Orphan adhesion G-protein coupled receptor (aGPCR). Ligand binding causes a conformation change that triggers signaling via guanine nucleotide-binding proteins (G proteins) and modulates the activity of downstream effectors, such as adenylate cyclase. ADGRG5 is specifically coupled to G(s) G proteins and mediates activation of adenylate cyclase activity. The chain is Adhesion G-protein coupled receptor G5 from Homo sapiens (Human).